Here is a 301-residue protein sequence, read N- to C-terminus: tRNA pseudouridine synthase B (301 aa).

Catalysis depends on Asp-38, which acts as the Nucleophile.

The protein belongs to the pseudouridine synthase TruB family. Type 1 subfamily.

The catalysed reaction is uridine(55) in tRNA = pseudouridine(55) in tRNA. Functionally, responsible for synthesis of pseudouridine from uracil-55 in the psi GC loop of transfer RNAs. The protein is tRNA pseudouridine synthase B of Clostridioides difficile (strain 630) (Peptoclostridium difficile).